Consider the following 197-residue polypeptide: Imidazoleglycerol-phosphate dehydratase (197 aa).

Belongs to the imidazoleglycerol-phosphate dehydratase family.

The protein resides in the cytoplasm. It catalyses the reaction D-erythro-1-(imidazol-4-yl)glycerol 3-phosphate = 3-(imidazol-4-yl)-2-oxopropyl phosphate + H2O. It participates in amino-acid biosynthesis; L-histidine biosynthesis; L-histidine from 5-phospho-alpha-D-ribose 1-diphosphate: step 6/9. The sequence is that of Imidazoleglycerol-phosphate dehydratase from Rhodopseudomonas palustris (strain HaA2).